The sequence spans 276 residues: uncharacterized protein (276 aa).

Positions 20–137 constitute an AB hydrolase-1 domain; sequence PVLIFIPGAN…PPINTFLPDS (118 aa). A disordered region spans residues 57 to 76; sequence GESELTEPLPDSASNPDSDY.

The protein belongs to the AB hydrolase superfamily.

This is an uncharacterized protein from Staphylococcus aureus (strain bovine RF122 / ET3-1).